The primary structure comprises 427 residues: Endothelin-1 receptor (427 aa).

The N-terminal stretch at methionine 1–alanine 20 is a signal peptide. The Extracellular portion of the chain corresponds to aspartate 21–lysine 80. Residues asparagine 29 and asparagine 62 are each glycosylated (N-linked (GlcNAc...) asparagine). Residues tyrosine 81 to leucine 102 traverse the membrane as a helical segment. The Cytoplasmic portion of the chain corresponds to arginine 103 to arginine 112. Residues asparagine 113 to isoleucine 132 traverse the membrane as a helical segment. Topologically, residues aspartate 133 to lysine 159 are extracellular. A disulfide bridge connects residues cysteine 158 and cysteine 239. The helical transmembrane segment at leucine 160–valine 181 threads the bilayer. At aspartate 182–glutamate 205 the chain is on the cytoplasmic side. Residues isoleucine 206–phenylalanine 229 traverse the membrane as a helical segment. Residues glutamate 230–aspartate 256 are Extracellular-facing. Asparagine 242 carries N-linked (GlcNAc...) asparagine glycosylation. A helical transmembrane segment spans residues tryptophan 257–methionine 278. The Cytoplasmic portion of the chain corresponds to threonine 279–lysine 306. The chain crosses the membrane as a helical span at residues threonine 307–leucine 328. Topologically, residues lysine 329–leucine 347 are extracellular. Residues leucine 348 to valine 372 traverse the membrane as a helical segment. The Cytoplasmic segment spans residues serine 373–asparagine 427. The interval lysine 408 to asparagine 427 is disordered. Basic and acidic residues predominate over residues asparagine 416 to asparagine 427. Serine 425 is modified (phosphoserine).

Belongs to the G-protein coupled receptor 1 family. Endothelin receptor subfamily. EDNRA sub-subfamily. In terms of assembly, interacts with HDAC7 and KAT5.

The protein resides in the cell membrane. Its function is as follows. Receptor for endothelin-1. Mediates its action by association with G proteins that activate a phosphatidylinositol-calcium second messenger system. The rank order of binding affinities for ET-A is: ET1 &gt; ET2 &gt;&gt; ET3. In Mus musculus (Mouse), this protein is Endothelin-1 receptor.